The sequence spans 506 residues: Exoglucanase (506 aa).

The signal sequence occupies residues 1–18; the sequence is MFPRSILLALSLTAVALG. The tract at residues 19–450 is catalytic; that stretch reads QQVGTNMAEN…IKFGDINSTF (432 aa). E227 (nucleophile) is an active-site residue. E232 functions as the Proton donor in the catalytic mechanism. Residue N308 is glycosylated (N-linked (GlcNAc...) asparagine). Residues 405–426 form a disordered region; it reads ASPSQPGISRGTCSRDSGKPED. Polar residues predominate over residues 406-419; that stretch reads SPSQPGISRGTCSR. N447 carries an N-linked (GlcNAc...) asparagine glycan. A disordered region spans residues 449 to 472; the sequence is TFNNNGGGGGNPSPTTTRPNSPAQ. A linker region spans residues 451 to 473; that stretch reads NNNGGGGGNPSPTTTRPNSPAQT. The span at 460 to 470 shows a compositional bias: low complexity; it reads PSPTTTRPNSP. The CBM1 domain maps to 470-506; it reads PAQTMWGQCGGQGWTGPTACQSPSTCHVINDFYSQCF. Intrachain disulfides connect C478–C495 and C489–C505.

This sequence belongs to the glycosyl hydrolase 7 (cellulase C) family.

It catalyses the reaction Hydrolysis of (1-&gt;4)-beta-D-glucosidic linkages in cellulose and cellotetraose, releasing cellobiose from the non-reducing ends of the chains.. In terms of biological role, the biological conversion of cellulose to glucose generally requires three types of hydrolytic enzymes: (1) Endoglucanases which cut internal beta-1,4-glucosidic bonds; (2) Exocellobiohydrolases that cut the disaccharide cellobiose from the non-reducing end of the cellulose polymer chain; (3) Beta-1,4-glucosidases which hydrolyze the cellobiose and other short cello-oligosaccharides to glucose. This chain is Exoglucanase (cel2), found in Agaricus bisporus (White button mushroom).